Reading from the N-terminus, the 579-residue chain is MNQMRNGDLGSESFGTCLLLSLPEDVIAVIARFVSPRDICNLSLCCKSLCDVVDSERIWLVQCEVVKVLPLSEIIQWRIGISSYKALCWFLGEVMKPLVGVWVHQNPELGNVVYVMPGFLSVVGCRIIPQEVGPLGIEEARVMWSPVFEIICGFDGSAKFFLHGRDGKVQCCLHPGFVRGIEKSCNVLLLEVETRREKKLCNEIDETVLLVETGVQLPFRKLPFSYRRNLLHIVTSTVGIPVPDLSSEKLFPTSKDDEAVLLERRTMLLKMHKFGGDWNHMNLEDECTNIPNQVDINKSWKHLGFEGDIRNMDAENQTQRKSFSRYFRSGIKHILGRSSSSKNMSSSRSETRPLNLQKFLNFGDSIGLSLKASNIKLSSYQGWPNMDETRYALYKLPIKDPIANDEYAGLWGGTFGWPPGKCTEDKPGKAFFLLMLSYEESQDGTERLLIGTKILEGTHYGMHPNGSAMFVIKIDSPSFEGFPFDTNGEDFEHSYAGEGTAKGYGFRYPGYKPGTLFVTSKGLLMFIWKATKAVLTLQRLNLGELLRKGVCVSPLPPCLNFAYLIKCHTNVFAPERRRS.

Residues 16–62 (TCLLLSLPEDVIAVIARFVSPRDICNLSLCCKSLCDVVDSERIWLVQ) enclose the F-box domain.

The chain is F-box protein At5g39450 from Arabidopsis thaliana (Mouse-ear cress).